We begin with the raw amino-acid sequence, 90 residues long: MNKLFFVVFLCLIISVLAIGPADLGCTDMPQAEFDEKNANCEKCGNEEGFGEEMVSRCRDKCFTDNFYQSCVDLLNKVYEEKDVPVPPEE.

The signal sequence occupies residues 1-18 (MNKLFFVVFLCLIISVLA).

This sequence belongs to the arthropod CHH/MIH/GIH/VIH hormone family. In terms of tissue distribution, expressed by the venom gland.

The protein localises to the secreted. May increase the toxicity of alpha-latrotoxin and/or other venom components. Is non-toxic to mice and to the cockroach Periplaneta americana. This is Alpha-latrotoxin associated low molecular weight protein from Latrodectus geometricus (Brown widow spider).